The following is a 697-amino-acid chain: uncharacterized protein (697 aa).

A coiled-coil region spans residues 516-545; the sequence is ADQSQNDVVALSSRIDRLTQEVVALQNSEK.

This is an uncharacterized protein from Callospermophilus lateralis (Golden-mantled ground squirrel).